A 319-amino-acid polypeptide reads, in one-letter code: D-alanine--D-alanine ligase (319 aa).

In terms of domain architecture, ATP-grasp spans 109–313 (KRVWLAEGLP…YEQLCLHILQ (205 aa)). 139 to 194 (PDDLGLPLIVKPPREGSSIGVTKVLGYSQMQDAVALSARHDPDVLCEEFIDGAEVT) is an ATP binding site. Mg(2+) is bound by residues D266, E280, and N282.

Belongs to the D-alanine--D-alanine ligase family. It depends on Mg(2+) as a cofactor. The cofactor is Mn(2+).

Its subcellular location is the cytoplasm. It catalyses the reaction 2 D-alanine + ATP = D-alanyl-D-alanine + ADP + phosphate + H(+). Its pathway is cell wall biogenesis; peptidoglycan biosynthesis. Functionally, cell wall formation. The sequence is that of D-alanine--D-alanine ligase from Methylibium petroleiphilum (strain ATCC BAA-1232 / LMG 22953 / PM1).